A 434-amino-acid polypeptide reads, in one-letter code: Putative ankyrin repeat protein FPV219 (434 aa).

ANK repeat units lie at residues 33 to 62, 66 to 95, 101 to 131, 132 to 161, 165 to 195, 196 to 225, and 229 to 258; these read DDLSPLHHAVSRGYKEIVISMLEHGADVNL, EVCSPLHIAIKNDNVEMVQLLIDNGADTDC, HGTPLQCAILNENYRITDALLESGADTHEIY, TKNHPIIEAIKLDNLPLVRLLLRHGADVNT, LYGYPIHLAIRYGNIDIIKELLYHGVIESYS, LYPSLLHQSIMCNNKEVVLLLISMGFDVNA, and EGNTPMHLAVQKNLVGIVKILLDKGADTSI.

This Fowlpox virus (strain NVSL) (FPV) protein is Putative ankyrin repeat protein FPV219.